The following is a 613-amino-acid chain: Phostensin (613 aa).

Residues 15 to 33 (RRQEEASVRGREKAERERL) show a composition bias toward basic and acidic residues. Disordered regions lie at residues 15 to 231 (RRQE…SAYQ) and 266 to 505 (GEER…GKKR). 5 positions are modified to phosphoserine: S54, S125, S133, S175, and S195. Basic and acidic residues-rich tracts occupy residues 104-154 (RSEE…ERRL) and 167-191 (LEAR…EPWK). The residue at position 199 (T199) is a Phosphothreonine. A compositionally biased stretch (basic and acidic residues) spans 199 to 221 (TPERSLRLAESREQSPRRKEVES). S224 is modified (phosphoserine). Positions 266-282 (GEERQGYSEKCGRKEEW) are enriched in basic and acidic residues. Positions 301 to 310 (REAQGSSSTG) are enriched in polar residues. 3 stretches are compositionally biased toward basic and acidic residues: residues 314 to 327 (AEQR…RGMK), 340 to 350 (KAREWTPRDIE), and 357 to 367 (EPSESAEKRLE). Phosphoserine occurs at positions 368 and 432. Over residues 424 to 446 (QPPPPAPLSPPPPAPTAPQPPGD) the composition is skewed to pro residues. Residue K457 is modified to N6-acetyllysine. The span at 476–499 (PRRSVPPTTPATPTSPATADAAVP) shows a compositional bias: low complexity. Phosphoserine occurs at positions 490 and 530. The segment at 552 to 594 (QYPSESSVLEELGPEPEVPSAPNPPAAQPDDEEDEEELLLLQP) is disordered. The span at 567–578 (PEVPSAPNPPAA) shows a compositional bias: pro residues. Acidic residues predominate over residues 580 to 589 (PDDEEDEEEL).

As to quaternary structure, interacts with Protein phosphatase 1 (PP1).

The protein localises to the cytoplasm. It is found in the cytoskeleton. Its function is as follows. May target protein phosphatase 1 to F-actin cytoskeleton. This is Phostensin (PPP1R18) from Macaca mulatta (Rhesus macaque).